A 631-amino-acid chain; its full sequence is Phosphomethylpyrimidine synthase (631 aa).

Residues N239, M268, Y297, H333, 353–355, 394–397, and E433 each bind substrate; these read SRG and DGLR. H437 serves as a coordination point for Zn(2+). A substrate-binding site is contributed by Y460. Position 501 (H501) interacts with Zn(2+). Positions 581, 584, and 589 each coordinate [4Fe-4S] cluster.

This sequence belongs to the ThiC family. In terms of assembly, homodimer. Requires [4Fe-4S] cluster as cofactor.

The enzyme catalyses 5-amino-1-(5-phospho-beta-D-ribosyl)imidazole + S-adenosyl-L-methionine = 4-amino-2-methyl-5-(phosphooxymethyl)pyrimidine + CO + 5'-deoxyadenosine + formate + L-methionine + 3 H(+). It participates in cofactor biosynthesis; thiamine diphosphate biosynthesis. Its function is as follows. Catalyzes the synthesis of the hydroxymethylpyrimidine phosphate (HMP-P) moiety of thiamine from aminoimidazole ribotide (AIR) in a radical S-adenosyl-L-methionine (SAM)-dependent reaction. This Shigella dysenteriae serotype 1 (strain Sd197) protein is Phosphomethylpyrimidine synthase.